The chain runs to 536 residues: Bifunctional purine biosynthesis protein PurH (536 aa).

The MGS-like domain occupies 8–158 (IPAPDEVRIQ…KNHAYVTIVT (151 aa)).

This sequence belongs to the PurH family.

It carries out the reaction (6R)-10-formyltetrahydrofolate + 5-amino-1-(5-phospho-beta-D-ribosyl)imidazole-4-carboxamide = 5-formamido-1-(5-phospho-D-ribosyl)imidazole-4-carboxamide + (6S)-5,6,7,8-tetrahydrofolate. The catalysed reaction is IMP + H2O = 5-formamido-1-(5-phospho-D-ribosyl)imidazole-4-carboxamide. The protein operates within purine metabolism; IMP biosynthesis via de novo pathway; 5-formamido-1-(5-phospho-D-ribosyl)imidazole-4-carboxamide from 5-amino-1-(5-phospho-D-ribosyl)imidazole-4-carboxamide (10-formyl THF route): step 1/1. It participates in purine metabolism; IMP biosynthesis via de novo pathway; IMP from 5-formamido-1-(5-phospho-D-ribosyl)imidazole-4-carboxamide: step 1/1. This is Bifunctional purine biosynthesis protein PurH from Sinorhizobium fredii (strain NBRC 101917 / NGR234).